The chain runs to 124 residues: Small ribosomal subunit protein uS12 (124 aa).

Aspartate 89 carries the 3-methylthioaspartic acid modification. The interval 104-124 is disordered; the sequence is LQGVKDRKQSRSKYGAKRPKK. Residues 113-124 show a composition bias toward basic residues; the sequence is SRSKYGAKRPKK.

This sequence belongs to the universal ribosomal protein uS12 family. Part of the 30S ribosomal subunit. Contacts proteins S8 and S17. May interact with IF1 in the 30S initiation complex.

Its function is as follows. With S4 and S5 plays an important role in translational accuracy. In terms of biological role, interacts with and stabilizes bases of the 16S rRNA that are involved in tRNA selection in the A site and with the mRNA backbone. Located at the interface of the 30S and 50S subunits, it traverses the body of the 30S subunit contacting proteins on the other side and probably holding the rRNA structure together. The combined cluster of proteins S8, S12 and S17 appears to hold together the shoulder and platform of the 30S subunit. In Thiomonas delicata (Thiomonas cuprina), this protein is Small ribosomal subunit protein uS12.